A 1299-amino-acid polypeptide reads, in one-letter code: DExH-box ATP-dependent RNA helicase DExH6 (1299 aa).

The R3H domain occupies 15–82 (PTSVEATRIW…QRRLSIFKSR (68 aa)). Residues 197–366 (TSAVESNQVI…FGGCPVVRVP (170 aa)) form the Helicase ATP-binding domain. 210–217 (GETGCGKT) serves as a coordination point for ATP. The DEIH box motif lies at 313 to 316 (DEIH). In terms of domain architecture, Helicase C-terminal spans 537–711 (LIQQLMRKIC…ELCLQVKILD (175 aa)). 2 disordered regions span residues 987-1039 (PTGS…MMSS) and 1175-1299 (IPRQ…AEQK). Residues 992–1006 (DSDDSNEEEEDDEEV) are compositionally biased toward acidic residues. A compositionally biased stretch (low complexity) spans 1007-1020 (AANTNEEVAANTNE). A compositionally biased stretch (basic and acidic residues) spans 1023-1032 (MDIHKEESRR). Composition is skewed to polar residues over residues 1176 to 1193 (PRQQNYKQRNPKATNNTD), 1204 to 1214 (NPTNRINQPEA), and 1239 to 1251 (PSDQAYGNKQHNT). The Bipartite nuclear localization signal signature appears at 1182-1200 (KQRNPKATNNTDSGKKKEK). The Bipartite nuclear localization signal motif lies at 1267 to 1283 (KKTKTRSGNNSDSGKKK). Residues 1279–1299 (SGKKKEQYIPKRQREDKAEQK) are compositionally biased toward basic and acidic residues.

This sequence belongs to the DExH box helicase family. As to expression, specifically expressed in the tapetum and vascular tissues.

It localises to the nucleus. It carries out the reaction ATP + H2O = ADP + phosphate + H(+). May function as an ATP-dependent RNA/DNA helicase. The polypeptide is DExH-box ATP-dependent RNA helicase DExH6 (Arabidopsis thaliana (Mouse-ear cress)).